A 186-amino-acid chain; its full sequence is UPF0301 protein Daro_3893 (186 aa).

This sequence belongs to the UPF0301 (AlgH) family.

This chain is UPF0301 protein Daro_3893, found in Dechloromonas aromatica (strain RCB).